A 208-amino-acid chain; its full sequence is Uracil phosphoribosyltransferase (208 aa).

5-phospho-alpha-D-ribose 1-diphosphate contacts are provided by residues arginine 78, arginine 103, and 130 to 138; that span reads DPMLATGGS. Residues isoleucine 193 and 198–200 contribute to the uracil site; that span reads GDA. Position 199 (aspartate 199) interacts with 5-phospho-alpha-D-ribose 1-diphosphate.

Belongs to the UPRTase family. The cofactor is Mg(2+).

The enzyme catalyses UMP + diphosphate = 5-phospho-alpha-D-ribose 1-diphosphate + uracil. It functions in the pathway pyrimidine metabolism; UMP biosynthesis via salvage pathway; UMP from uracil: step 1/1. Allosterically activated by GTP. Functionally, catalyzes the conversion of uracil and 5-phospho-alpha-D-ribose 1-diphosphate (PRPP) to UMP and diphosphate. The sequence is that of Uracil phosphoribosyltransferase from Citrobacter koseri (strain ATCC BAA-895 / CDC 4225-83 / SGSC4696).